Here is a 468-residue protein sequence, read N- to C-terminus: 6-phospho-beta-galactosidase (468 aa).

5 residues coordinate D-galactose 6-phosphate: Gln-19, His-116, Asn-159, Glu-160, and Asn-297. The active-site Proton donor is Glu-160. Glu-375 functions as the Nucleophile in the catalytic mechanism. D-galactose 6-phosphate-binding residues include Ser-428, Trp-429, Lys-435, and Tyr-437.

It belongs to the glycosyl hydrolase 1 family.

It carries out the reaction a 6-phospho-beta-D-galactoside + H2O = D-galactose 6-phosphate + an alcohol. It participates in carbohydrate metabolism; lactose degradation; D-galactose 6-phosphate and beta-D-glucose from lactose 6-phosphate: step 1/1. The protein is 6-phospho-beta-galactosidase of Streptococcus pyogenes serotype M5 (strain Manfredo).